Consider the following 146-residue polypeptide: Large ribosomal subunit protein uL15 (146 aa).

The disordered stretch occupies residues 1 to 42 (MTIKLHDLQPARGSKTTRTRVGRGEASKGKTAGRGTKGTKAR).

Belongs to the universal ribosomal protein uL15 family. In terms of assembly, part of the 50S ribosomal subunit.

Binds to the 23S rRNA. The sequence is that of Large ribosomal subunit protein uL15 from Mycobacterium leprae (strain Br4923).